Reading from the N-terminus, the 376-residue chain is MMAFITVKPEIKNNLANVAKELKIDEELLKSANRSAQKHQLYCPGYVIEEHSGKELQTIQDIKRFLQPRQLKLSDSWIEQEKIYDDSAVEKEIKKIIDVFPFVSCREIGRSVLGRPIWELKAGGEHAVKKVHMNASFHANEWITTSVLLKWFKEYCMSLCCNSPFFGFSPIKLFNSTSLSLVPLVNPDGVDLVLNGSEVMGARRDELERLNEHRPNFNEWKANINGVDLNKQFPSLWEIEKYRKPTAPSYRDFPGISPLTEPESIAMYRLITENPPDRLLALHTQGEEIYWGYKGLEPEESAAVIKEFEELSGNIYKGVRDIDSYAGFRDWFIHHYFKEGYTVELGKGQNPLPFQQFSHIYNATSGILWRALFFHE.

Positions 82 to 372 (KIYDDSAVEK…ATSGILWRAL (291 aa)) constitute a Peptidase M14 domain. Zn(2+) is bound by residues H138, E141, and H283. The Proton donor/acceptor role is filled by E344.

Belongs to the peptidase M14 family. The cofactor is Zn(2+).

This is an uncharacterized protein from Bacillus subtilis (strain 168).